The primary structure comprises 219 residues: HTH-type transcriptional regulator LutR (219 aa).

Residues M1–F56 form the HTH gntR-type domain. A DNA-binding region (H-T-H motif) is located at residues V16–S35.

Negatively regulates the transcription of the lutABC operon, which is required for L-lactate utilization. LutR activity is regulated by lactate, since presence of L-lactate, that probably binds to LutR, leads to derepression of the operon. Also appears to be essential for bacilysin biosynthesis. This chain is HTH-type transcriptional regulator LutR (lutR), found in Bacillus subtilis (strain 168).